A 213-amino-acid polypeptide reads, in one-letter code: NADH-quinone oxidoreductase subunit I (213 aa).

4Fe-4S ferredoxin-type domains are found at residues 74 to 103 (RFIESENERCIGCGLCEKICISNCIRMETS) and 113 to 142 (GNYSINLGRCIYCGFCAEVCPELAIVHGIE). Residues cysteine 83, cysteine 86, cysteine 89, cysteine 93, cysteine 122, cysteine 125, cysteine 128, and cysteine 132 each contribute to the [4Fe-4S] cluster site.

Belongs to the complex I 23 kDa subunit family. As to quaternary structure, NDH-1 is composed of 14 different subunits. Subunits NuoA, H, J, K, L, M, N constitute the membrane sector of the complex. Requires [4Fe-4S] cluster as cofactor.

The protein resides in the cell inner membrane. It carries out the reaction a quinone + NADH + 5 H(+)(in) = a quinol + NAD(+) + 4 H(+)(out). In terms of biological role, NDH-1 shuttles electrons from NADH, via FMN and iron-sulfur (Fe-S) centers, to quinones in the respiratory chain. The immediate electron acceptor for the enzyme in this species is believed to be ubiquinone. Couples the redox reaction to proton translocation (for every two electrons transferred, four hydrogen ions are translocated across the cytoplasmic membrane), and thus conserves the redox energy in a proton gradient. The protein is NADH-quinone oxidoreductase subunit I of Campylobacter jejuni subsp. doylei (strain ATCC BAA-1458 / RM4099 / 269.97).